Here is a 426-residue protein sequence, read N- to C-terminus: Serine--tRNA ligase (426 aa).

233-235 (TAE) contributes to the L-serine binding site. 264 to 266 (RAE) contacts ATP. Glu-287 serves as a coordination point for L-serine. 351 to 354 (EISS) provides a ligand contact to ATP. Ser-387 provides a ligand contact to L-serine.

The protein belongs to the class-II aminoacyl-tRNA synthetase family. Type-1 seryl-tRNA synthetase subfamily. In terms of assembly, homodimer. The tRNA molecule binds across the dimer.

Its subcellular location is the cytoplasm. It catalyses the reaction tRNA(Ser) + L-serine + ATP = L-seryl-tRNA(Ser) + AMP + diphosphate + H(+). It carries out the reaction tRNA(Sec) + L-serine + ATP = L-seryl-tRNA(Sec) + AMP + diphosphate + H(+). Its pathway is aminoacyl-tRNA biosynthesis; selenocysteinyl-tRNA(Sec) biosynthesis; L-seryl-tRNA(Sec) from L-serine and tRNA(Sec): step 1/1. In terms of biological role, catalyzes the attachment of serine to tRNA(Ser). Is also able to aminoacylate tRNA(Sec) with serine, to form the misacylated tRNA L-seryl-tRNA(Sec), which will be further converted into selenocysteinyl-tRNA(Sec). The protein is Serine--tRNA ligase of Clostridium novyi (strain NT).